The chain runs to 991 residues: Receptor-like protein kinase HAIKU2 (991 aa).

The N-terminal stretch at methionine 1 to serine 19 is a signal peptide. At arginine 20–methionine 616 the chain is on the extracellular side. Asparagine 22 is a glycosylation site (N-linked (GlcNAc...) asparagine). LRR repeat units lie at residues aspartate 66–aspartate 90, leucine 99–cysteine 123, arginine 125–leucine 148, glutamate 150–aspartate 170, leucine 171–leucine 196, threonine 197–leucine 220, valine 221–leucine 244, asparagine 246–asparagine 267, threonine 269–leucine 291, lysine 292–aspartate 314, phenylalanine 315–tryptophan 339, alanine 341–lysine 363, valine 365–cysteine 387, lysine 388–leucine 411, asparagine 413–alanine 435, lysine 436–alanine 459, serine 461–lysine 482, leucine 483–threonine 508, leucine 510–leucine 531, lysine 532–alanine 554, and leucine 555–glycine 578. N-linked (GlcNAc...) asparagine glycans are attached at residues asparagine 109, asparagine 135, asparagine 155, asparagine 195, and asparagine 206. Residues asparagine 267 and asparagine 278 are each glycosylated (N-linked (GlcNAc...) asparagine). 2 N-linked (GlcNAc...) asparagine glycosylation sites follow: asparagine 397 and asparagine 427. N-linked (GlcNAc...) asparagine glycosylation is present at asparagine 495. Asparagine 538 carries N-linked (GlcNAc...) asparagine glycosylation. The helical transmembrane segment at cysteine 617 to isoleucine 637 threads the bilayer. Residues arginine 638 to valine 991 lie on the Cytoplasmic side of the membrane. Positions isoleucine 671–tyrosine 970 constitute a Protein kinase domain. Residues isoleucine 677 to valine 685 and lysine 699 each bind ATP. 2 positions are modified to phosphotyrosine: tyrosine 762 and tyrosine 801. Aspartate 814 acts as the Proton acceptor in catalysis. Residues tyrosine 859 and tyrosine 866 each carry the phosphotyrosine modification. A Phosphothreonine modification is found at threonine 867. Residues lysine 972–valine 991 form a disordered region.

Belongs to the protein kinase superfamily. Ser/Thr protein kinase family. In terms of tissue distribution, expressed in the endosperm of fertilized ovules.

It localises to the membrane. The catalysed reaction is L-seryl-[protein] + ATP = O-phospho-L-seryl-[protein] + ADP + H(+). It carries out the reaction L-threonyl-[protein] + ATP = O-phospho-L-threonyl-[protein] + ADP + H(+). Its function is as follows. Modulates the seed size by negatively regulating the cellularization of syncytial endosperm. The polypeptide is Receptor-like protein kinase HAIKU2 (IKU2) (Arabidopsis thaliana (Mouse-ear cress)).